Reading from the N-terminus, the 364-residue chain is Fructose-bisphosphate aldolase, non-muscle type (364 aa).

Substrate contacts are provided by arginine 56 and lysine 147. Lysine 230 acts as the Schiff-base intermediate with dihydroxyacetone-P in catalysis.

The protein belongs to the class I fructose-bisphosphate aldolase family. Homotetramer. As to expression, expressed mainly in the liver and also in brain and other tissues, except for the heart muscle.

The catalysed reaction is beta-D-fructose 1,6-bisphosphate = D-glyceraldehyde 3-phosphate + dihydroxyacetone phosphate. It participates in carbohydrate degradation; glycolysis; D-glyceraldehyde 3-phosphate and glycerone phosphate from D-glucose: step 4/4. In Lethenteron camtschaticum (Japanese lamprey), this protein is Fructose-bisphosphate aldolase, non-muscle type.